Consider the following 1262-residue polypeptide: ATP-dependent helicase/nuclease subunit A (1262 aa).

A UvrD-like helicase ATP-binding domain is found at 5-476; that stretch reads FSFTPSQDQA…IVLAENFRSM (472 aa). Residue 26–33 participates in ATP binding; it reads ASAGSGKT. Residues 515 to 808 enclose the UvrD-like helicase C-terminal domain; it reads DTVTSTAELL…SVMTIHGSKG (294 aa).

Belongs to the helicase family. AddA subfamily. As to quaternary structure, heterodimer of AddA and AddB/RexB. Mg(2+) serves as cofactor.

The catalysed reaction is Couples ATP hydrolysis with the unwinding of duplex DNA by translocating in the 3'-5' direction.. It catalyses the reaction ATP + H2O = ADP + phosphate + H(+). Its function is as follows. The heterodimer acts as both an ATP-dependent DNA helicase and an ATP-dependent, dual-direction single-stranded exonuclease. Recognizes the chi site generating a DNA molecule suitable for the initiation of homologous recombination. The AddA nuclease domain is required for chi fragment generation; this subunit has the helicase and 3' -&gt; 5' nuclease activities. The sequence is that of ATP-dependent helicase/nuclease subunit A from Levilactobacillus brevis (strain ATCC 367 / BCRC 12310 / CIP 105137 / JCM 1170 / LMG 11437 / NCIMB 947 / NCTC 947) (Lactobacillus brevis).